The chain runs to 104 residues: Large ribosomal subunit protein uL24 (104 aa).

It belongs to the universal ribosomal protein uL24 family. In terms of assembly, part of the 50S ribosomal subunit.

One of two assembly initiator proteins, it binds directly to the 5'-end of the 23S rRNA, where it nucleates assembly of the 50S subunit. In terms of biological role, one of the proteins that surrounds the polypeptide exit tunnel on the outside of the subunit. The chain is Large ribosomal subunit protein uL24 from Herminiimonas arsenicoxydans.